Here is a 29-residue protein sequence, read N- to C-terminus: Omega-conotoxin MVIIC (29 aa).

A propeptide spanning residues 1–2 (TR) is cleaved from the precursor. Cystine bridges form between C3–C18, C10–C22, and C17–C28. Cysteine amide is present on C28.

Belongs to the conotoxin O1 superfamily. In terms of processing, not hydroxylated; hydroxylation, on a synthetic hydroxylated MVIIC, has a significant impact on the oxidative folding but not on the biological activity. As to expression, expressed by the venom duct.

The protein localises to the secreted. Omega-conotoxins act at presynaptic membranes, they bind and block voltage-gated calcium channels (Cav). This toxin preferentially blocks P/Q-type calcium channels (Cav2.1/CACNA1A) (IC(50)=0.60 nM). Also shows an inhibition on Cav2.2/CACNA1A channels (IC(50)=7.0 nM). The protein is Omega-conotoxin MVIIC of Conus magus (Magical cone).